Consider the following 736-residue polypeptide: Nucleoporin nup60 (736 aa).

Positions 1–46 are disordered; that stretch reads MSSGPIRTLHKGKAARNRTPYDRIAASKDGNHSNGPQTPSKSIFQR. A compositionally biased stretch (basic and acidic residues) spans 19–31; the sequence is TPYDRIAASKDGN. A compositionally biased stretch (polar residues) spans 32 to 43; sequence HSNGPQTPSKSI. Phosphoserine occurs at positions 157, 159, 161, and 162. 5 disordered regions span residues 178-210, 295-321, 338-519, 565-614, and 647-701; these read RAAA…NSAK, DTSF…KTPS, TPSI…PNET, AVTD…RSLF, and EQAE…FPKF. Polar residues-rich tracts occupy residues 196 to 210 and 295 to 314; these read RTSS…NSAK and DTSF…TTAN. Over residues 375–397 the composition is skewed to basic and acidic residues; the sequence is QIRPSSEKSEPEKKEPSAFETLE. A compositionally biased stretch (polar residues) spans 456–473; that stretch reads SATTDKPSPPVSSIFSFN. Composition is skewed to low complexity over residues 474–505 and 573–587; these read APSA…TSFS and EVSS…TMIS. A compositionally biased stretch (polar residues) spans 588–597; the sequence is QPNTGFSFGS. Residues 664 to 692 show a composition bias toward basic and acidic residues; it reads EVEKPSAEGTNEHKQDATMTLEKTDKQGS.

Component of the nuclear pore complex (NPC). NPC constitutes the exclusive means of nucleocytoplasmic transport. NPCs allow the passive diffusion of ions and small molecules and the active, nuclear transport receptor-mediated bidirectional transport of macromolecules such as proteins, RNAs, ribonucleoparticles (RNPs), and ribosomal subunits across the nuclear envelope.

Its subcellular location is the nucleus. The protein resides in the nuclear pore complex. It localises to the nucleus membrane. Functionally, functions as a component of the nuclear pore complex (NPC). NPC components, collectively referred to as nucleoporins (NUPs), can play the role of both NPC structural components and of docking or interaction partners for transiently associated nuclear transport factors. Active directional transport is assured by both, a Phe-Gly (FG) repeat affinity gradient for these transport factors across the NPC and a transport cofactor concentration gradient across the nuclear envelope. The polypeptide is Nucleoporin nup60 (nup60) (Schizosaccharomyces pombe (strain 972 / ATCC 24843) (Fission yeast)).